The primary structure comprises 429 residues: Tol-Pal system protein TolB (429 aa).

A signal peptide spans 1–22 (MTRRLFILITIMLCLIPALLHS). 2 disordered regions span residues 362–383 (PDGT…RWSP) and 407–429 (GSGQ…SPRW). Positions 363 to 374 (DGTNDTRLTSEG) are enriched in polar residues.

Belongs to the TolB family. In terms of assembly, the Tol-Pal system is composed of five core proteins: the inner membrane proteins TolA, TolQ and TolR, the periplasmic protein TolB and the outer membrane protein Pal. They form a network linking the inner and outer membranes and the peptidoglycan layer.

The protein localises to the periplasm. Functionally, part of the Tol-Pal system, which plays a role in outer membrane invagination during cell division and is important for maintaining outer membrane integrity. This chain is Tol-Pal system protein TolB, found in Geobacter metallireducens (strain ATCC 53774 / DSM 7210 / GS-15).